We begin with the raw amino-acid sequence, 353 residues long: O-antigen biosynthesis glycosyltransferase WclY (353 aa).

Residues 116 to 136 (SLIGGLLWCSIWLFFDKLVIL) traverse the membrane as a helical segment. UDP-binding residues include asparagine 190 and glutamate 271. Positions 263–271 (EGFGLTVLE) match the E(x7)E motif.

It belongs to the glycosyltransferase group 1 family. Glycosyltransferase 4 subfamily.

Its subcellular location is the membrane. Its pathway is bacterial outer membrane biogenesis; LPS O-antigen biosynthesis. Activated by 5mM MnCl(2) and MgCl(2). No significant effect on activity by 5 mM ethylenediaminetetraacetic acid (EDTA), 0.125-0.5% Triton X-100 or dithiothreitol (DTT). Inhibited by 5 mM Zn-acetate. Functionally, involved in the assembly of the O-repeating unit during O-antigen biosynthesis. Glucosyltransferase accountable for the alpha-D-Glc-1,4-beta-D-Gal linkage within the O-antigen. Transfers alpha-1,4-Glc to the Gal moiety of a specific Gal-beta1-3GalNAc-alpha-OPO3-PO3-phenoxyundecyl (Gal-beta1-3GalNAc-PP-PhU) synthetic natural acceptor substrate analog. Requires both Gal-beta1-3GalNAc-alpha and the diphosphate moiety in the acceptor. Not active with GalNAc-PP-PhU, GlcNAc-PP-PhU, Gal-beta1-3GalNAc-alpha-O-benzyl, D-Rha-alpha1-3GlcNAc-alpha-PP-PhU or D-Man-alpha1-3Man-alpha-5-benzamidopentyl (BAP), nor with glycopeptides TTTVTP (Gal-beta1-3GalNAc-alpha-)TPTG or TT (Gal-beta1-3GalNAc-alpha-)TVTPTPTG as acceptor substrates. Has a broad nucleotide sugar donor substrate specificity with ADP-Glc, TDP-Glc and UDP-Glc as superior donors. Gal, GlcNAc, and GalNAc residues are transferred from UDP-sugars, but with low activity. UDP-Xyl, UDP-GlcA, GDP-Fuc or GDP-K-Rha do not act as donors. This chain is O-antigen biosynthesis glycosyltransferase WclY, found in Escherichia coli.